A 276-amino-acid polypeptide reads, in one-letter code: Phosphate import ATP-binding protein PstB 2 (276 aa).

The ABC transporter domain maps to 22-262 (MAAVNLTLGF…PKHAETARYV (241 aa)). An ATP-binding site is contributed by 54 to 61 (GPTGSGKT).

Belongs to the ABC transporter superfamily. Phosphate importer (TC 3.A.1.7) family. The complex is composed of two ATP-binding proteins (PstB), two transmembrane proteins (PstC and PstA) and a solute-binding protein (PstS).

The protein localises to the cell membrane. It catalyses the reaction phosphate(out) + ATP + H2O = ADP + 2 phosphate(in) + H(+). Its function is as follows. Part of the ABC transporter complex PstSACB involved in phosphate import. Responsible for energy coupling to the transport system. The protein is Phosphate import ATP-binding protein PstB 2 of Mycobacterium bovis (strain ATCC BAA-935 / AF2122/97).